Consider the following 440-residue polypeptide: Serine protease inhibitor A3G (440 aa).

Positions 357–382 are RCL; the sequence is GTEAAAATGMAGVGCCAVFDFLEIFF.

This sequence belongs to the serpin family. As to expression, expressed in bone marrow (particularly hematopoietic stem cells), heart, kidney, liver, lung, skeletal muscle, spleen, testis, thymus and T-cells.

It localises to the cytoplasm. The protein localises to the nucleus. Functionally, serine and cysteine protease inhibitor. Can inhibit lysosomal papain-like proteases including the cathepsins B, G, H, K, L and V. Ineffective against elastase, granzyme A, granzyme B, or caspases 3, 8 or 9. Inhibition of cytoplasmic cathepsin B following release from the lysosome may protect cells from apoptosis. This may facilitate the survival of progenitor T-cells and the subsequent development of long term memory CD8 T-cells. The chain is Serine protease inhibitor A3G (Serpina3g) from Mus musculus (Mouse).